The chain runs to 742 residues: Envelope glycoprotein H (742 aa).

The N-terminal stretch at 1–29 is a signal peptide; that stretch reads MRPGLPSYLIVLAVCLLSHLLSSRYGAEA. The Virion surface portion of the chain corresponds to 30 to 719; it reads ISEPLDKAFH…VVDATDSRLL (690 aa). Asparagine 55, asparagine 62, asparagine 67, and asparagine 192 each carry an N-linked (GlcNAc...) asparagine; by host glycan. The tract at residues 217–280 is interaction with gL; that stretch reads YLIDELRYVK…QTEKHELLVL (64 aa). N-linked (GlcNAc...) asparagine; by host glycosylation is found at asparagine 641 and asparagine 700. Residues 720–740 traverse the membrane as a helical segment; it reads MMSVYALSAIIGIYLLYRMLK. The Intravirion portion of the chain corresponds to 741-742; it reads TC.

The protein belongs to the herpesviridae glycoprotein H family. In terms of assembly, interacts with glycoprotein L (gL); this interaction is necessary for the correct processing and cell surface expression of gH. The heterodimer gH/gL seems to interact with gB trimers during fusion. Forms the envelope pentamer complex (PC) composed of gH, gL, UL128, UL130, and UL131A. The pentamer interacts with host NRP2. Forms the envelope trimer complex composed of gH, gL, and gO. The trimer interacts with host PDGFRA. The trimer also interacts with host EPHA2. N-glycosylated, O-glycosylated, and sialylated.

The protein localises to the virion membrane. The protein resides in the host cell membrane. It localises to the host endosome membrane. Its function is as follows. The heterodimer glycoprotein H-glycoprotein L is required for the fusion of viral and plasma membranes leading to virus entry into the host cell. Following initial binding to host receptor, membrane fusion is mediated by the fusion machinery composed of gB and the heterodimer gH/gL. May also be involved in the fusion between the virion envelope and the outer nuclear membrane during virion morphogenesis. In human cytomegalovirus, forms two distincts complexes to mediate viral entry, a trimer and a pentamer at the surface of the virion envelope. The gH-gL-gO trimer is required for infection in fibroblasts by interacting with host PDGFRA, and in glioblastoma cells by interacting with host EPHA2. The gH-gL-UL128-UL130-UL131A pentamer is essential for viral entry in epithelial, endothelial and myeloid cells via interaction with host NRP2. In Human cytomegalovirus (strain Towne) (HHV-5), this protein is Envelope glycoprotein H.